The following is a 353-amino-acid chain: Inactive metacaspase-4 (353 aa).

Residue Gly2 is the site of N-myristoyl glycine attachment.

It belongs to the peptidase C14B family. In terms of processing, palmitoylated. Post-translationally, proteolytic cleavage by MCA3 occurs prior or during secretion and requires MCA4 membrane localization. Cleavage is dispensable for secretion and parasite growth and virulence in the mammalian host. In vitro, can be cleaved by MCA2 but specifically cleaved by MCA3 in vivo.

The protein localises to the cell projection. Its subcellular location is the cilium. It is found in the flagellum membrane. It localises to the secreted. In terms of biological role, inactive metacaspase which plays a role in parasite bloodstream form growth and in parasite virulence within the mammalian host. The polypeptide is Inactive metacaspase-4 (Trypanosoma brucei brucei).